The following is a 1017-amino-acid chain: Dopamine dehydroxylase (1017 aa).

Residues M1–A34 constitute a signal peptide (tat-type signal). Residues D45 to D103 enclose the 4Fe-4S Mo/W bis-MGD-type domain. [4Fe-4S] cluster contacts are provided by C53, C56, C61, and C89. K91 serves as the catalytic Electron donor/acceptor.

This sequence belongs to the prokaryotic molybdopterin-containing oxidoreductase family. It depends on [4Fe-4S] cluster as a cofactor. Mo-bis(molybdopterin guanine dinucleotide) is required as a cofactor. Predicted to be exported by the Tat system. The position of the signal peptide cleavage has not been experimentally proven.

The enzyme catalyses dopamine + AH2 = 3-tyramine + A + H2O. Functionally, involved in drug metabolism, as part of an interspecies gut bacterial pathway for Levodopa (L-dopa) metabolism, acting on dopamine produced by Enterecoccus L-dopa decarboxylase. Removes the para hydroxyl group of dopamine to produce m-tyramine (3-tyramine). It is possible that dopamine dehydroxylation influences the multiple side effects of L-dopa administration linked to dopamine production in the treatment of Parkinson's disease. In Eggerthella lenta (Eubacterium lentum), this protein is Dopamine dehydroxylase.